The chain runs to 115 residues: Alpha-endosulfine (115 aa).

A compositionally biased stretch (polar residues) spans 1 to 10 (MSSENLSDTQ). Positions 1–27 (MSSENLSDTQMEYEDEKQDSQEKNANL) are disordered. At serine 65 the chain carries Phosphoserine; by GWL. A disordered region spans residues 77-115 (NKQLPVAGPDKNLVTGDHIPTPQDLPQRRSSLVTSKLAG). Residues 104 to 115 (RRSSLVTSKLAG) are compositionally biased toward polar residues.

Belongs to the endosulfine family. Phosphorylation at Ser-65 by gwl during mitosis is essential for interaction with ppp2r2d (PR55-delta) and subsequent inactivation of PP2A.

The protein localises to the cytoplasm. Functionally, protein phosphatase inhibitor that specifically inhibits protein phosphatase 2A (PP2A) during mitosis. When phosphorylated at Ser-67 during mitosis, specifically interacts with ppp2r2d (PR55-delta) and inhibits its activity, leading to inactivation of PP2A, an essential condition to keep cyclin-B1-CDK1 activity high during M phase. In Salmo salar (Atlantic salmon), this protein is Alpha-endosulfine (ensa).